A 379-amino-acid polypeptide reads, in one-letter code: Homoserine O-succinyltransferase (379 aa).

The AB hydrolase-1 domain maps to 51–360 (NAVLICHALS…DAPQGHDAFL (310 aa)). Ser-157 (nucleophile) is an active-site residue. Arg-227 contacts substrate. Active-site residues include Asp-323 and His-356. Asp-357 is a substrate binding site.

Belongs to the AB hydrolase superfamily. MetX family. As to quaternary structure, homodimer.

The protein resides in the cytoplasm. It carries out the reaction L-homoserine + succinyl-CoA = O-succinyl-L-homoserine + CoA. It participates in amino-acid biosynthesis; L-methionine biosynthesis via de novo pathway; O-succinyl-L-homoserine from L-homoserine: step 1/1. Its function is as follows. Transfers a succinyl group from succinyl-CoA to L-homoserine, forming succinyl-L-homoserine. The protein is Homoserine O-succinyltransferase of Pseudomonas syringae pv. tomato (strain ATCC BAA-871 / DC3000).